The sequence spans 28 residues: RICPRIWMECKRDSDCMAQCICVDGHCG.

Cystine bridges form between Cys-3-Cys-20, Cys-10-Cys-22, and Cys-16-Cys-27.

It belongs to the protease inhibitor I7 (squash-type serine protease inhibitor) family.

The protein localises to the secreted. Inhibits trypsin. This Momordica charantia (Bitter gourd) protein is Trypsin inhibitor 2.